A 360-amino-acid chain; its full sequence is Dihydroorotate dehydrogenase (quinone) (360 aa).

FMN contacts are provided by residues alanine 66–lysine 70 and threonine 90. Lysine 70 is a substrate binding site. Asparagine 115–phenylalanine 119 is a substrate binding site. 2 residues coordinate FMN: asparagine 143 and asparagine 176. Asparagine 176 is a binding site for substrate. Residue serine 179 is the Nucleophile of the active site. Asparagine 181 is a binding site for substrate. 2 residues coordinate FMN: lysine 212 and threonine 240. Residue asparagine 241–threonine 242 coordinates substrate. FMN is bound by residues glycine 264, glycine 293, and tyrosine 314–threonine 315.

It belongs to the dihydroorotate dehydrogenase family. Type 2 subfamily. Monomer. The cofactor is FMN.

It localises to the cell membrane. The enzyme catalyses (S)-dihydroorotate + a quinone = orotate + a quinol. It participates in pyrimidine metabolism; UMP biosynthesis via de novo pathway; orotate from (S)-dihydroorotate (quinone route): step 1/1. Catalyzes the conversion of dihydroorotate to orotate with quinone as electron acceptor. The sequence is that of Dihydroorotate dehydrogenase (quinone) from Mycobacterium marinum (strain ATCC BAA-535 / M).